Consider the following 712-residue polypeptide: NURS complex subunit red1 (712 aa).

Positions Met1 to Glu22 are enriched in basic and acidic residues. Disordered stretches follow at residues Met1–Pro71, Asn107–Gln195, and Asp323–Met348. The stretch at Ile5 to Glu32 forms a coiled coil. Residues Glu23 to Val42 are compositionally biased toward acidic residues. A compositionally biased stretch (low complexity) spans Ser130–Ser141. Polar residues-rich tracts occupy residues Phe178–Thr193 and Asn327–Met348. Residues Ser351 to Lys379 are a coiled coil. The segment at Pro428–Thr447 is disordered. Residues Ala471–Ser501 are a coiled coil. Over residues Gln545 to Glu567 the composition is skewed to polar residues. Positions Gln545–Thr568 are disordered. The C3H1-type zinc finger occupies Phe618–Arg639.

Interacts with mmi1, pla1 and rrp6.

It localises to the nucleus. Functionally, promotes the exosome-mediated degradation of mRNAs containing a DSR (determinant of selective removal) signal sequence from mitotic cells. The chain is NURS complex subunit red1 from Schizosaccharomyces pombe (strain 972 / ATCC 24843) (Fission yeast).